A 223-amino-acid polypeptide reads, in one-letter code: uncharacterized protein (223 aa).

This is an uncharacterized protein from Acanthamoeba polyphaga (Amoeba).